A 394-amino-acid polypeptide reads, in one-letter code: Flap endonuclease 1 (394 aa).

An N-domain region spans residues 1–103 (MGIKSLYQII…GELAKRTMRK (103 aa)). Position 34 (Asp-34) interacts with Mg(2+). Arg-69 serves as a coordination point for DNA. A Mg(2+)-binding site is contributed by Asp-85. Positions 102–123 (RKAEAQEAAEEAKETGTAEDVE) are disordered. The segment at 121–252 (DVEKFSRRTV…NTALKMIRDH (132 aa)) is I-domain. Residues Glu-157, Glu-159, Asp-178, and Asp-180 each contribute to the Mg(2+) site. Glu-157 provides a ligand contact to DNA. DNA is bound by residues Gly-230 and Asp-232. Asp-232 is a Mg(2+) binding site. The interval 340–348 (QQSRLEGFF) is interaction with PCNA. The tract at residues 349–394 (KPVAKTEQQKATAKRKAEEKAELAKKKKKEDAKAKRAMGAKPRGAR) is disordered. The segment covering 363-382 (RKAEEKAELAKKKKKEDAKA) has biased composition (basic and acidic residues). A compositionally biased stretch (basic residues) spans 383-394 (KRAMGAKPRGAR).

This sequence belongs to the XPG/RAD2 endonuclease family. FEN1 subfamily. In terms of assembly, interacts with PCNA. Three molecules of FEN1 bind to one PCNA trimer with each molecule binding to one PCNA monomer. PCNA stimulates the nuclease activity without altering cleavage specificity. The cofactor is Mg(2+). In terms of processing, phosphorylated. Phosphorylation upon DNA damage induces relocalization to the nuclear plasma.

The protein localises to the nucleus. Its subcellular location is the nucleolus. It localises to the nucleoplasm. The protein resides in the mitochondrion. Structure-specific nuclease with 5'-flap endonuclease and 5'-3' exonuclease activities involved in DNA replication and repair. During DNA replication, cleaves the 5'-overhanging flap structure that is generated by displacement synthesis when DNA polymerase encounters the 5'-end of a downstream Okazaki fragment. It enters the flap from the 5'-end and then tracks to cleave the flap base, leaving a nick for ligation. Also involved in the long patch base excision repair (LP-BER) pathway, by cleaving within the apurinic/apyrimidinic (AP) site-terminated flap. Acts as a genome stabilization factor that prevents flaps from equilibrating into structures that lead to duplications and deletions. Also possesses 5'-3' exonuclease activity on nicked or gapped double-stranded DNA, and exhibits RNase H activity. Also involved in replication and repair of rDNA and in repairing mitochondrial DNA. This Arthroderma otae (strain ATCC MYA-4605 / CBS 113480) (Microsporum canis) protein is Flap endonuclease 1.